A 152-amino-acid chain; its full sequence is MKVWVDADACPGVTKETLFRAADRAEIETILIANHSVRIPPSRFIKMVTVSSGFDVADDEIVKRLTAGDLVITADIPLAAEVIEKGGLALNPRGELYTEQNIKSILNMRDFMDTMRASGVQTGGPAAMSQSERQAFANQLDRLITKFKQQKK.

It belongs to the UPF0178 family.

The polypeptide is UPF0178 protein swp_1285 (Shewanella piezotolerans (strain WP3 / JCM 13877)).